The sequence spans 501 residues: Xylulose kinase (501 aa).

81–82 (MH) contacts substrate. D239 acts as the Proton acceptor in catalysis.

It belongs to the FGGY kinase family.

It carries out the reaction D-xylulose + ATP = D-xylulose 5-phosphate + ADP + H(+). Functionally, catalyzes the phosphorylation of D-xylulose to D-xylulose 5-phosphate. The sequence is that of Xylulose kinase from Lactococcus lactis subsp. lactis (strain IL1403) (Streptococcus lactis).